The primary structure comprises 255 residues: MFKVRVIPCLDVKDGRVVKGINFVDLRDAGDPVEAAIAYDAAGADELTFLDITATHENRGIMLDVVRRTAEACFMPLTVGGGVRTVDDIKTLLRSGADKVSINSAAVARREFVKEAAEKFGEQCIVVAIDAKRVPGKDRWEIFTHGGRKGTGIDAIDYAQEVVSLGAGEILLTSMDRDGTRQGFDIPLTSAIADSVPVPVIASGGVGNLDHLVEGIAKGHATAVLAASIFHFGEFTIRQAKEHMVRSGLPMRLDP.

Residues Asp11 and Asp130 contribute to the active site.

This sequence belongs to the HisA/HisF family. In terms of assembly, heterodimer of HisH and HisF.

It localises to the cytoplasm. It carries out the reaction 5-[(5-phospho-1-deoxy-D-ribulos-1-ylimino)methylamino]-1-(5-phospho-beta-D-ribosyl)imidazole-4-carboxamide + L-glutamine = D-erythro-1-(imidazol-4-yl)glycerol 3-phosphate + 5-amino-1-(5-phospho-beta-D-ribosyl)imidazole-4-carboxamide + L-glutamate + H(+). Its pathway is amino-acid biosynthesis; L-histidine biosynthesis; L-histidine from 5-phospho-alpha-D-ribose 1-diphosphate: step 5/9. Its function is as follows. IGPS catalyzes the conversion of PRFAR and glutamine to IGP, AICAR and glutamate. The HisF subunit catalyzes the cyclization activity that produces IGP and AICAR from PRFAR using the ammonia provided by the HisH subunit. In Rhodopseudomonas palustris (strain BisA53), this protein is Imidazole glycerol phosphate synthase subunit HisF.